A 105-amino-acid chain; its full sequence is Small ribosomal subunit protein uS10 (105 aa).

It belongs to the universal ribosomal protein uS10 family. As to quaternary structure, part of the 30S ribosomal subunit.

Involved in the binding of tRNA to the ribosomes. The chain is Small ribosomal subunit protein uS10 from Thermus thermophilus (strain ATCC BAA-163 / DSM 7039 / HB27).